Here is a 333-residue protein sequence, read N- to C-terminus: Testin-2 (333 aa).

Positions 1–17 are cleaved as a signal peptide; sequence MIAVLFLAILCLEVDST. 3 cysteine pairs are disulfide-bonded: cysteine 135–cysteine 178, cysteine 169–cysteine 211, and cysteine 269–cysteine 322. N-linked (GlcNAc...) asparagine glycosylation occurs at asparagine 173. Residues histidine 276 and asparagine 300 contribute to the active site.

Belongs to the peptidase C1 family. Sertoli cells.

It is found in the secreted. The polypeptide is Testin-2 (Testin) (Rattus norvegicus (Rat)).